Reading from the N-terminus, the 422-residue chain is MDFKQIKSNVEKVKFLRKDFPILNKKFDNKYIIYFDNAATSQKPKNVIYSNVEYYENYNANVHRSGHKFAIQSSIKIEKTRELVKNFINAESAKNIIFTSGTTDGINTIASSFFYSKYFKKKDEIILTTLEHNSNLLPWVNLANLANLKIKLAKFNEMGIITPEEIEKLITEKTKLISISGINNTLGTINDLESIGKIAKKYNICLFVDAAQMAPHIKIDVKKIGCDFLVFSGHKMLAPTGIGILYISNNMAEKLHSSKLGGNTVEEIFIENEKIKFKASDSPNKFESGTPNIAGIIGLEEAIKYIDNISMDFILEHDKQLIEYGVKKLQELDEVEFILNTNLKRNSIISFTVKNIHSHDIETYLDTMGIATRAGRTCSYVAFFPENLNKDHLLRISFYFYNTQEEIDNFILGLKKVIKELS.

Lys-235 bears the N6-(pyridoxal phosphate)lysine mark.

The protein belongs to the class-V pyridoxal-phosphate-dependent aminotransferase family. Csd subfamily. Requires pyridoxal 5'-phosphate as cofactor.

It carries out the reaction (sulfur carrier)-H + L-cysteine = (sulfur carrier)-SH + L-alanine. Catalyzes the removal of elemental sulfur and selenium atoms from L-cysteine, L-cystine, L-selenocysteine, and L-selenocystine to produce L-alanine. This chain is Probable cysteine desulfurase (csd), found in Borreliella burgdorferi (strain ATCC 35210 / DSM 4680 / CIP 102532 / B31) (Borrelia burgdorferi).